The following is a 111-amino-acid chain: uncharacterized protein (111 aa).

Residues 18-41 traverse the membrane as a helical segment; the sequence is FFYFFFISFYTLWIVFFLLHLSFF.

The protein localises to the membrane. This is an uncharacterized protein from Saccharomyces cerevisiae (strain ATCC 204508 / S288c) (Baker's yeast).